A 436-amino-acid polypeptide reads, in one-letter code: 3-ketoacyl-CoA thiolase (436 aa).

The active-site Acyl-thioester intermediate is Cys-99. Active-site proton acceptor residues include His-392 and Cys-422.

It belongs to the thiolase-like superfamily. Thiolase family. As to quaternary structure, heterotetramer of two alpha chains (FadJ) and two beta chains (FadI).

The protein resides in the cytoplasm. The enzyme catalyses an acyl-CoA + acetyl-CoA = a 3-oxoacyl-CoA + CoA. Its pathway is lipid metabolism; fatty acid beta-oxidation. Catalyzes the final step of fatty acid oxidation in which acetyl-CoA is released and the CoA ester of a fatty acid two carbons shorter is formed. This is 3-ketoacyl-CoA thiolase from Yersinia enterocolitica serotype O:8 / biotype 1B (strain NCTC 13174 / 8081).